A 626-amino-acid polypeptide reads, in one-letter code: Methanol dehydrogenase [cytochrome c] subunit 1 (626 aa).

Residues 1-27 (MSRFVTSVSALAMLALAPAALSSGAYA) form the signal peptide. Cysteines 130 and 131 form a disulfide. Positions 204 and 288 each coordinate Ca(2+). Aspartate 330 acts as the Proton acceptor in catalysis. A disulfide bond links cysteine 413 and cysteine 442.

It belongs to the bacterial PQQ dehydrogenase family. In terms of assembly, heterotetramer composed of 2 alpha and 2 beta subunits. Requires pyrroloquinoline quinone as cofactor. It depends on Ca(2+) as a cofactor.

It is found in the cell inner membrane. The enzyme catalyses 2 Fe(III)-[cytochrome cL] + a primary alcohol = 2 Fe(II)-[cytochrome cL] + an aldehyde + 2 H(+). Its function is as follows. Catalyzes the oxidation of primary alcohols including methanol. This chain is Methanol dehydrogenase [cytochrome c] subunit 1 (moxF), found in Methylorubrum extorquens (strain ATCC 14718 / DSM 1338 / JCM 2805 / NCIMB 9133 / AM1) (Methylobacterium extorquens).